An 81-amino-acid polypeptide reads, in one-letter code: uncharacterized protein (81 aa).

This is an uncharacterized protein from Archaeoglobus fulgidus (strain ATCC 49558 / DSM 4304 / JCM 9628 / NBRC 100126 / VC-16).